The chain runs to 95 residues: Integration host factor subunit alpha (95 aa).

The segment at 51 to 71 (NFDLRDKNERPGRNPKTGEDI) is disordered. Residues 53-69 (DLRDKNERPGRNPKTGE) show a composition bias toward basic and acidic residues.

It belongs to the bacterial histone-like protein family. Heterodimer of an alpha and a beta chain.

Its function is as follows. This protein is one of the two subunits of integration host factor, a specific DNA-binding protein that functions in genetic recombination as well as in transcriptional and translational control. The sequence is that of Integration host factor subunit alpha from Vibrio vulnificus (strain CMCP6).